Reading from the N-terminus, the 1108-residue chain is Folliculin-interacting protein 2 (1108 aa).

The 419-residue stretch at 38 to 456 folds into the uDENN FNIP1/2-type domain; sequence FGLSDIRLLV…TVMPVDHPPI (419 aa). Disordered stretches follow at residues 89 to 112, 209 to 233, 598 to 635, and 649 to 671; these read QESS…GGSL, RTGS…DRDS, SEGV…AEPD, and QNDQ…PRVR. Residues 91 to 106 show a composition bias toward low complexity; sequence SSSSSGSSSSGSSSSH. Ser212 and Ser217 each carry phosphoserine. Residues 464 to 1034 form the cDENN FNIP1/2-type domain; sequence TSQSVNMLAK…VSSLLQSILQ (571 aa). The tract at residues 540–905 is interaction with PRKAA1; it reads DDQVINGSKI…DEACVLALLE (366 aa). The span at 606–620 shows a compositional bias: basic and acidic residues; sequence LGHKPEKNRCKRPEQ. A compositionally biased stretch (polar residues) spans 652-663; the sequence is QEATQDCSSSPP. 3 positions are modified to phosphoserine: Ser720, Ser721, and Ser723. Residues 1044-1099 form the dDENN FNIP1/2-type domain; that stretch reads FCIMHLEDRLQEMYLKSKMLSEYLRGHTRVHVKELSVVLGIESNDLPLLTAIASTH.

This sequence belongs to the FNIP family. Homodimer and homomultimer. Heterodimer and heteromultimer with FNIP1. Interacts (via C-terminus) with FLCN (via C-terminus). Phosphorylated FLCN is preferentially bound. Component of the lysosomal folliculin complex (LFC), composed of FLCN, FNIP1 (or FNIP2), RagA/RRAGA or RagB/RRAGB GDP-bound, RagC/RRAGC or RagD/RRAGD GTP-bound, and Ragulator. Interacts with PRKAA1, PRKAB1 and PRKAG1 subunits of 5'-AMP-activated protein kinase. Interacts with HSP70, HSP90AA1, STIP1, PTGES3, CDC37, BRAF, GCR and CDK4. In terms of processing, phosphorylated by AMPK.

It is found in the lysosome membrane. The protein resides in the cytoplasm. In terms of biological role, binding partner of the GTPase-activating protein FLCN: involved in the cellular response to amino acid availability by regulating the non-canonical mTORC1 signaling cascade controlling the MiT/TFE factors TFEB and TFE3. Required to promote FLCN recruitment to lysosomes and interaction with Rag GTPases, leading to activation of the non-canonical mTORC1 signaling. In low-amino acid conditions, component of the lysosomal folliculin complex (LFC) on the membrane of lysosomes, which inhibits the GTPase-activating activity of FLCN, thereby inactivating mTORC1 and promoting nuclear translocation of TFEB and TFE3. Upon amino acid restimulation, disassembly of the LFC complex liberates the GTPase-activating activity of FLCN, leading to activation of mTORC1 and subsequent inactivation of TFEB and TFE3. Together with FLCN, regulates autophagy: following phosphorylation by ULK1, interacts with GABARAP and promotes autophagy. In addition to its role in mTORC1 signaling, also acts as a co-chaperone of HSP90AA1/Hsp90: inhibits the ATPase activity of HSP90AA1/Hsp90, leading to activate both kinase and non-kinase client proteins of HSP90AA1/Hsp90. Acts as a scaffold to load client protein FLCN onto HSP90AA1/Hsp90. Competes with the activating co-chaperone AHSA1 for binding to HSP90AA1, thereby providing a reciprocal regulatory mechanism for chaperoning of client proteins. May play a role in the signal transduction pathway of apoptosis induced by O6-methylguanine-mispaired lesions. The chain is Folliculin-interacting protein 2 from Mus musculus (Mouse).